A 322-amino-acid polypeptide reads, in one-letter code: Extracellular metalloprotease AFUB_008060 (322 aa).

Positions 1–22 (MLPFNSCVYVLLIISLMSNCRA) are cleaved as a signal peptide. 2 N-linked (GlcNAc...) asparagine glycosylation sites follow: asparagine 123 and asparagine 197. Histidine 233 serves as a coordination point for Zn(2+). Glutamate 234 is an active-site residue. Histidine 237 lines the Zn(2+) pocket. Cysteine 272 and cysteine 299 are oxidised to a cystine.

The protein belongs to the peptidase M43B family.

Its subcellular location is the secreted. Secreted metalloproteinase that allows assimilation of proteinaceous substrates. Plays a pivotal role as a pathogenicity determinant during infections and contributes to the ability of the pathogen to persist within the mammalian host. In Aspergillus fumigatus (strain CBS 144.89 / FGSC A1163 / CEA10) (Neosartorya fumigata), this protein is Extracellular metalloprotease AFUB_008060.